An 846-amino-acid chain; its full sequence is Outer membrane channel protein CpnT (846 aa).

Positions 1–443 (MAPLAVDPAA…AGVRGLKERL (443 aa)) are NTD. The disordered stretch occupies residues 442–630 (RLEPTTPHLE…SGSEPPGLHA (189 aa)). Composition is skewed to pro residues over residues 450–466 (LEPP…PPRI) and 475–504 (APAP…PPVD). 2 stretches are compositionally biased toward low complexity: residues 508–517 (EPVAPSSASA) and 562–586 (APAT…HSTP). The TNT stretch occupies residues 651-846 (RLSDEAVDPQ…ELIRRGVLRQ (196 aa)). A TNT domain is found at 751-846 (YGPQLDRIGG…ELIRRGVLRQ (96 aa)). The active site involves R757. NAD(+) is bound at residue R780. Q822 is an active-site residue.

Interacts with the immunity factor for TNT (IFT) homolog. The C-terminal domain (TNT) is probably cleaved.

The protein localises to the cell outer membrane. The protein resides in the secreted. It localises to the cell surface. The enzyme catalyses NAD(+) + H2O = ADP-D-ribose + nicotinamide + H(+). Glycohydrolase activity is completely inhibited by interaction with the immunity factor for TNT (IFT) homolog. This inhibition protects M.bovis from self-poisoning. In terms of biological role, the N-terminal domain (NTD) forms an outer membrane channel and is used for uptake of nutrients across the outer membrane. Also confers susceptibility to structurally different antibiotics and antituberculosis drugs, and to toxic immune factors such as nitric oxide (NO). The C-terminal domain (TNT) is dispensable for normal growth in macrophages. The sequence is that of Outer membrane channel protein CpnT from Mycobacterium bovis (strain BCG / Pasteur 1173P2).